Reading from the N-terminus, the 120-residue chain is NAD(P)H-quinone oxidoreductase subunit 3, chloroplastic (120 aa).

3 helical membrane-spanning segments follow: residues 10–30 (FLVFLIIACLIPVLALSASKL), 64–84 (MFALVFVIFDVETVFLYPWAV), and 89–109 (MGFISFLEALVFLSILIVGLV).

Belongs to the complex I subunit 3 family. As to quaternary structure, NDH is composed of at least 16 different subunits, 5 of which are encoded in the nucleus.

It is found in the plastid. The protein resides in the chloroplast thylakoid membrane. The enzyme catalyses a plastoquinone + NADH + (n+1) H(+)(in) = a plastoquinol + NAD(+) + n H(+)(out). It carries out the reaction a plastoquinone + NADPH + (n+1) H(+)(in) = a plastoquinol + NADP(+) + n H(+)(out). In terms of biological role, NDH shuttles electrons from NAD(P)H:plastoquinone, via FMN and iron-sulfur (Fe-S) centers, to quinones in the photosynthetic chain and possibly in a chloroplast respiratory chain. The immediate electron acceptor for the enzyme in this species is believed to be plastoquinone. Couples the redox reaction to proton translocation, and thus conserves the redox energy in a proton gradient. The protein is NAD(P)H-quinone oxidoreductase subunit 3, chloroplastic of Chlorokybus atmophyticus (Soil alga).